The primary structure comprises 707 residues: Leukotoxin export ATP-binding protein LtxB (707 aa).

Residues 4-125 form the Peptidase C39 domain; it reads QKNTNLALQA…ERYQSKVILI (122 aa). H83 is an active-site residue. Transmembrane regions (helical) follow at residues 158 to 178, 191 to 211, 269 to 289, 295 to 315, and 387 to 407; these read LIVS…FQVV, LNVI…LGGL, ALTS…MWYY, LVVL…SPIL, and AVMV…DLSI. Positions 158–436 constitute an ABC transmembrane type-1 domain; it reads LIVSIFLQIF…LAQIWQDFQQ (279 aa). The region spanning 468 to 703 is the ABC transporter domain; sequence ISFRNIKFRY…EKGLYSYLHQ (236 aa). 502–509 is a binding site for ATP; that stretch reads GRSGSGKS.

The protein belongs to the ABC transporter superfamily. Protein-1 exporter (TC 3.A.1.109) family. In terms of assembly, probably part of a complex composed of LtxB, LtxD and TdeA, which forms a single transport channel across the two membranes.

The protein localises to the cell inner membrane. It catalyses the reaction ATP + H2O + proteinSide 1 = ADP + phosphate + proteinSide 2.. Involved in the export of the LtxA leukotoxin. The chain is Leukotoxin export ATP-binding protein LtxB from Aggregatibacter actinomycetemcomitans (Actinobacillus actinomycetemcomitans).